A 355-amino-acid chain; its full sequence is tRNA-specific 2-thiouridylase MnmA (355 aa).

ATP-binding positions include 6-13 (AMSGGVDS) and methionine 32. Cysteine 93 acts as the Nucleophile in catalysis. Cysteines 93 and 191 form a disulfide. Glycine 117 serves as a coordination point for ATP. Positions 140-142 (KDQ) are interaction with tRNA. The active-site Cysteine persulfide intermediate is the cysteine 191. An interaction with tRNA region spans residues 296 to 297 (RY).

Belongs to the MnmA/TRMU family.

The protein localises to the cytoplasm. It carries out the reaction S-sulfanyl-L-cysteinyl-[protein] + uridine(34) in tRNA + AH2 + ATP = 2-thiouridine(34) in tRNA + L-cysteinyl-[protein] + A + AMP + diphosphate + H(+). In terms of biological role, catalyzes the 2-thiolation of uridine at the wobble position (U34) of tRNA, leading to the formation of s(2)U34. This chain is tRNA-specific 2-thiouridylase MnmA, found in Pelobacter propionicus (strain DSM 2379 / NBRC 103807 / OttBd1).